The chain runs to 1112 residues: Mediator of RNA polymerase II transcription subunit 14 (1112 aa).

Disordered stretches follow at residues 1-76 (MPGV…INES), 120-141 (SPHG…QSPE), and 1088-1112 (TNSA…ITID). Residues 20 to 39 (SPDNVSSTPFPQERVNQSGD) show a composition bias toward polar residues. Over residues 64–73 (IETHTGKDGI) the composition is skewed to basic and acidic residues. The segment covering 1088–1099 (TNSAGARSSQQC) has biased composition (polar residues).

Belongs to the Mediator complex subunit 14 family. As to quaternary structure, component of the Mediator complex.

The protein resides in the nucleus. Functionally, component of the Mediator complex, a coactivator involved in the regulated transcription of nearly all RNA polymerase II-dependent genes. Mediator functions as a bridge to convey information from gene-specific regulatory proteins to the basal RNA polymerase II transcription machinery. Mediator is recruited to promoters by direct interactions with regulatory proteins and serves as a scaffold for the assembly of a functional preinitiation complex with RNA polymerase II and the general transcription factors. This is Mediator of RNA polymerase II transcription subunit 14 (rgr1) from Aspergillus clavatus (strain ATCC 1007 / CBS 513.65 / DSM 816 / NCTC 3887 / NRRL 1 / QM 1276 / 107).